A 338-amino-acid polypeptide reads, in one-letter code: MGSTGSVSAWDEALLIAAIQYPVPIIRGPEDIQVQVQQICKTMDSTKAGYPDLDFIVFPEYSAQGLNTKIWTYDEMLLSLDSPEIDCFRRACIRNDVWGVFSIMERNEDPSQIPYNTAIIINSNGEIVLHYRKLQPWVPIEPWMPGNLGMPVCEGPKGAKLAVCICHDGMFPELAREAAYKGCNVFIRISGYSTQVNDQWIWTNRTNAWQNLMYTVSVNLAGYDEVFYYFGEGTICNYDGNIIQQGQRNPWEIVTAELFPRLADKARENWALENSIFNLGCRGYVGKPGGERANYLTWVRDLANGEYKLPWDENIRIRDGWKYYPEGVKLGPLPKIDE.

Residues 14-260 (LLIAAIQYPV…WEIVTAELFP (247 aa)) enclose the CN hydrolase domain. Glutamate 60 (proton acceptor) is an active-site residue. Catalysis depends on lysine 133, which acts as the Proton donor. The Nucleophile role is filled by cysteine 166.

The protein belongs to the carbon-nitrogen hydrolase superfamily. Aliphatic amidase family.

The enzyme catalyses formamide + H2O = formate + NH4(+). Functionally, is an aliphatic amidase with a restricted substrate specificity, as it only hydrolyzes formamide. This chain is Formamidase, found in Photorhabdus laumondii subsp. laumondii (strain DSM 15139 / CIP 105565 / TT01) (Photorhabdus luminescens subsp. laumondii).